We begin with the raw amino-acid sequence, 476 residues long: Fatty acid hydroperoxide lyase, chloroplastic (476 aa).

The helical transmembrane segment at 280–300 (LLFILGFNAFGGFSIFLPTLL) threads the bilayer. Residue Cys438 participates in heme binding.

The protein belongs to the cytochrome P450 family. Requires heme as cofactor. Highly expressed in developing flowers and in young leaves. Detected in stems and immature green fruits, but not in mature green and red fruits.

The protein resides in the plastid. The protein localises to the chloroplast outer membrane. Reversibly inhibited by nordihydroguaiaretic acid (NDGA) and irreversibly by salicylic acid. Cytochrome P450 of the CYP74B subfamily involved in the biosynthesis of traumatin and C6 aldehydes. Metabolizes 13- but not 9-hydroperoxides of linoleic and linolenic acids. Can use 15S-hydroperoxy-11(Z),13(E),17(Z)-eicosatrienoic acid (15-HPET) and 13S-hydroperoxy-9(Z),11(E),15(Z)-octadecatrienoic acid (13-HPOT) as substrates, but only 5% activity with 13S-hydroperoxy-9(Z),11(E)-octadecadienoic acid (13-HPOD). Produces n-hexanal and 12-oxo-9(Z)-dodecanoic acid from 13-HPOD. The polypeptide is Fatty acid hydroperoxide lyase, chloroplastic (Solanum lycopersicum (Tomato)).